Here is a 325-residue protein sequence, read N- to C-terminus: uncharacterized protein (325 aa).

An HD domain is found at 49 to 151 (RYEHSIGVML…ELCADRTDYT (103 aa)).

This is an uncharacterized protein from Bacillus subtilis (strain 168).